A 375-amino-acid chain; its full sequence is Sulfite efflux pump SSU1 (375 aa).

Topologically, residues 1–25 (MPSGSGFHNIEEAGEKARKRDDWIA) are cytoplasmic. A helical transmembrane segment spans residues 26–46 (ISNFHPGWFSVNMGTGITAIL). At 47 to 59 (LQNLPYQFPGLHY) the chain is on the extracellular side. The chain crosses the membrane as a helical span at residues 60-80 (IAVILFILNVIIFFLFLTISI). The Cytoplasmic portion of the chain corresponds to 81–101 (TRYCLWPDKFKAMLAHPAHSM). The chain crosses the membrane as a helical span at residues 102–122 (LLGTFPMGFATIINCIVFICV). Residues 123–135 (PVWGEWASRFAWG) lie on the Extracellular side of the membrane. The helical transmembrane segment at 136-156 (LWWIDAAVSVAICYFVPFMLM) threads the bilayer. Residues 157–167 (TKHTSSLETMT) lie on the Cytoplasmic side of the membrane. Residues 168–188 (AAWLLPIVAPVVAAASGGVVA) traverse the membrane as a helical segment. The Extracellular segment spans residues 189–200 (DSLQNDTHALIT). N-linked (GlcNAc...) asparagine glycosylation occurs at Asn-193. A helical membrane pass occupies residues 201–221 (ILVCYVMWGSAVPLAMVILVI). At 222-234 (YFQRLAIHKLVPR) the chain is on the cytoplasmic side. Residues 235-255 (AAIVSALLPIGPLGQGGFGLM) traverse the membrane as a helical segment. Residues 256–277 (QLGVVAKRVFPRLDFLAPIAGD) lie on the Extracellular side of the membrane. A helical transmembrane segment spans residues 278-298 (IFYVMGAFIAMIMWGFGLIWL). Over 299-309 (WFALASFTRGK) the chain is Cytoplasmic. Residues 310 to 330 (FYFNIGWWAFTFPLGVFTTAT) form a helical membrane-spanning segment. The Extracellular portion of the chain corresponds to 331–343 (TQMGKEFNSPFFD). A helical transmembrane segment spans residues 344–364 (ILGTFFSIVVTCMWVLVFALT). Topologically, residues 365 to 375 (VYKSCTKELFR) are cytoplasmic.

Belongs to the tellurite-resistance/dicarboxylate transporter (TDT) family.

It localises to the cell membrane. In terms of biological role, sulphite efflux pump required for the secretion of sulphite as a reducing agent. In the presence of sulphite, cystine in keratin is directly cleaved to cysteine and S-sulphocysteine, and thereby, reduced proteins become accessible to hydrolysis by a variety of secreted endo- and exoproteases. Excretion of sulphite mediated by an efflux pump also represents a detoxification pathway for dermatophytes during infection of the epidermal stratum corneum, hair and nails, which are rich in cysteine. The sequence is that of Sulfite efflux pump SSU1 from Arthroderma benhamiae (strain ATCC MYA-4681 / CBS 112371) (Trichophyton mentagrophytes).